We begin with the raw amino-acid sequence, 432 residues long: 3-phosphoshikimate 1-carboxyvinyltransferase (432 aa).

3 residues coordinate 3-phosphoshikimate: K23, S24, and R28. Residue K23 participates in phosphoenolpyruvate binding. Residues G95 and R123 each contribute to the phosphoenolpyruvate site. The 3-phosphoshikimate site is built by S167, Q169, D317, and K344. Residue Q169 participates in phosphoenolpyruvate binding. The active-site Proton acceptor is the D317. R348 and R390 together coordinate phosphoenolpyruvate.

This sequence belongs to the EPSP synthase family. Monomer.

It localises to the cytoplasm. It carries out the reaction 3-phosphoshikimate + phosphoenolpyruvate = 5-O-(1-carboxyvinyl)-3-phosphoshikimate + phosphate. It participates in metabolic intermediate biosynthesis; chorismate biosynthesis; chorismate from D-erythrose 4-phosphate and phosphoenolpyruvate: step 6/7. Functionally, catalyzes the transfer of the enolpyruvyl moiety of phosphoenolpyruvate (PEP) to the 5-hydroxyl of shikimate-3-phosphate (S3P) to produce enolpyruvyl shikimate-3-phosphate and inorganic phosphate. The chain is 3-phosphoshikimate 1-carboxyvinyltransferase from Staphylococcus aureus (strain MRSA252).